We begin with the raw amino-acid sequence, 437 residues long: 3-phosphoshikimate 1-carboxyvinyltransferase (437 aa).

Residues K24, S25, and R29 each contribute to the 3-phosphoshikimate site. Position 24 (K24) interacts with phosphoenolpyruvate. Positions 95 and 123 each coordinate phosphoenolpyruvate. S168, Q170, D317, and K344 together coordinate 3-phosphoshikimate. Position 170 (Q170) interacts with phosphoenolpyruvate. D317 serves as the catalytic Proton acceptor. Phosphoenolpyruvate is bound by residues R348 and R390.

It belongs to the EPSP synthase family. In terms of assembly, monomer.

Its subcellular location is the cytoplasm. It catalyses the reaction 3-phosphoshikimate + phosphoenolpyruvate = 5-O-(1-carboxyvinyl)-3-phosphoshikimate + phosphate. The protein operates within metabolic intermediate biosynthesis; chorismate biosynthesis; chorismate from D-erythrose 4-phosphate and phosphoenolpyruvate: step 6/7. Its function is as follows. Catalyzes the transfer of the enolpyruvyl moiety of phosphoenolpyruvate (PEP) to the 5-hydroxyl of shikimate-3-phosphate (S3P) to produce enolpyruvyl shikimate-3-phosphate and inorganic phosphate. The protein is 3-phosphoshikimate 1-carboxyvinyltransferase of Wolinella succinogenes (strain ATCC 29543 / DSM 1740 / CCUG 13145 / JCM 31913 / LMG 7466 / NCTC 11488 / FDC 602W) (Vibrio succinogenes).